The primary structure comprises 288 residues: Chemotaxis protein methyltransferase 2 (288 aa).

The CheR-type methyltransferase domain occupies 1–280 (MNEIVITDTD…TGYYKPHKGK (280 aa)). Residues Asn-76, Thr-78, Arg-82, Glu-119, Asp-145, 200 to 201 (NL), and 219 to 220 (RN) each bind S-adenosyl-L-methionine.

It carries out the reaction L-glutamyl-[protein] + S-adenosyl-L-methionine = [protein]-L-glutamate 5-O-methyl ester + S-adenosyl-L-homocysteine. Its function is as follows. Methylation of the membrane-bound methyl-accepting chemotaxis proteins (MCP) to form gamma-glutamyl methyl ester residues in MCP. In Vibrio cholerae serotype O1 (strain ATCC 39315 / El Tor Inaba N16961), this protein is Chemotaxis protein methyltransferase 2 (cheR2).